A 446-amino-acid polypeptide reads, in one-letter code: Probable glucuronosyltransferase Os04g0650300 (446 aa).

Over 1–30 (MKLPLLRPLWPMLSPAAGSPDSPPEPSKPS) the chain is Cytoplasmic. The chain crosses the membrane as a helical; Signal-anchor for type II membrane protein span at residues 31 to 51 (LPAAWLLLHALFCATSMAVGF). Over 52–446 (RFSRLIVYLL…TTLLNTEGQH (395 aa)) the chain is Lumenal. N-linked (GlcNAc...) asparagine glycosylation is present at Asn87. The disordered stretch occupies residues 425 to 446 (QQDAKPETPLKRTTLLNTEGQH).

This sequence belongs to the glycosyltransferase 43 family.

The protein resides in the golgi apparatus membrane. In terms of biological role, involved in the synthesis of glucuronoxylan hemicellulose in secondary cell walls. The protein is Probable glucuronosyltransferase Os04g0650300 of Oryza sativa subsp. japonica (Rice).